Consider the following 2511-residue polypeptide: Chromodomain-helicase-DNA-binding protein 8 (2511 aa).

The interval 484–615 is disordered; it reads PRVLNQDELP…RSNRQVKRKK (132 aa). Residues 515 to 524 show a composition bias toward gly residues; it reads GGGVGGGGGG. Residues 604 to 615 are compositionally biased toward basic residues; the sequence is KRRSNRQVKRKK. Chromo domains follow at residues 680–745 and 760–826; these read AIVD…AQMR and VEVD…RTPR. Positions 859 to 1033 constitute a Helicase ATP-binding domain; the sequence is LFNWYNRQNC…FSLLHFLEPA (175 aa). 872-879 lines the ATP pocket; sequence DEMGLGKT. Residues 984-987 carry the DEAH box motif; it reads DEAH. A Helicase C-terminal domain is found at 1174-1330; the sequence is LLDKLLPRLK…SMSGNKESSI (157 aa). 4 disordered regions span residues 1440–1482, 1715–1736, 2086–2168, and 2468–2511; these read TRQF…HSGG, EQQA…SEDP, SKNN…LTDP, and PSAL…SSED. Residues 1452-1461 are compositionally biased toward acidic residues; sequence DLSDLDSDDD. Residues 2111–2125 are compositionally biased toward low complexity; the sequence is DSGSSSSSRHSGSSD.

This sequence belongs to the SNF2/RAD54 helicase family. CHD8 subfamily. Component of some MLL1/MLL complex.

The protein resides in the nucleus. It carries out the reaction ATP + H2O = ADP + phosphate + H(+). Its function is as follows. ATP-dependent chromatin-remodeling factor, it slides nucleosomes along DNA; nucleosome sliding requires ATP. Acts as a transcription repressor by remodeling chromatin structure and recruiting histone H1 to target genes. Suppresses p53/tp53-mediated apoptosis by recruiting histone H1 and preventing p53/tp53 transactivation activity. Acts as a negative regulator of Wnt signaling pathway by regulating beta-catenin (ctnnb1) activity. Negatively regulates ctnnb1-targeted gene expression by being recruited specifically to the promoter regions of several ctnnb1 responsive genes. May also act as a transcription activator by participating in efficient U6 RNA polymerase III transcription. This chain is Chromodomain-helicase-DNA-binding protein 8, found in Danio rerio (Zebrafish).